The chain runs to 392 residues: Succinyl-diaminopimelate desuccinylase (392 aa).

H71 contacts Zn(2+). D73 is an active-site residue. D102 is a binding site for Zn(2+). The active-site Proton acceptor is E144. Zn(2+) contacts are provided by E145, E173, and H362.

The protein belongs to the peptidase M20A family. DapE subfamily. Homodimer. Zn(2+) serves as cofactor. Co(2+) is required as a cofactor.

The catalysed reaction is N-succinyl-(2S,6S)-2,6-diaminopimelate + H2O = (2S,6S)-2,6-diaminopimelate + succinate. It functions in the pathway amino-acid biosynthesis; L-lysine biosynthesis via DAP pathway; LL-2,6-diaminopimelate from (S)-tetrahydrodipicolinate (succinylase route): step 3/3. Its function is as follows. Catalyzes the hydrolysis of N-succinyl-L,L-diaminopimelic acid (SDAP), forming succinate and LL-2,6-diaminopimelate (DAP), an intermediate involved in the bacterial biosynthesis of lysine and meso-diaminopimelic acid, an essential component of bacterial cell walls. The sequence is that of Succinyl-diaminopimelate desuccinylase from Rhodospirillum rubrum (strain ATCC 11170 / ATH 1.1.1 / DSM 467 / LMG 4362 / NCIMB 8255 / S1).